A 542-amino-acid polypeptide reads, in one-letter code: Mitogen-activated protein kinase 14 (542 aa).

The Protein kinase domain maps to Tyr-13–Phe-304. Residues Ile-19–Val-27 and Lys-42 contribute to the ATP site. Asp-139 (proton acceptor) is an active-site residue. A Phosphothreonine modification is found at Thr-175. The TXY signature appears at Thr-175–Tyr-177. Tyr-177 bears the Phosphotyrosine mark. Disordered regions lie at residues Ser-388–Pro-412 and Arg-482–Trp-542. Residues Pro-488 to Ser-507 are compositionally biased toward polar residues.

It belongs to the protein kinase superfamily. CMGC Ser/Thr protein kinase family. MAP kinase subfamily. In terms of processing, dually phosphorylated on Thr-175 and Tyr-177, which activates the enzyme.

The enzyme catalyses L-seryl-[protein] + ATP = O-phospho-L-seryl-[protein] + ADP + H(+). It catalyses the reaction L-threonyl-[protein] + ATP = O-phospho-L-threonyl-[protein] + ADP + H(+). Its activity is regulated as follows. Activated by threonine and tyrosine phosphorylation. This Oryza sativa subsp. japonica (Rice) protein is Mitogen-activated protein kinase 14 (MPK14).